Consider the following 67-residue polypeptide: Cell division protein ZapB (67 aa).

The stretch at 3 to 59 forms a coiled coil; sequence LELLSKLETKIQAALETIELLKMELEEEKQTSSSLSEQNQQLQQELTSWNEKVTGLV.

It belongs to the ZapB family. Homodimer. The ends of the coiled-coil dimer bind to each other, forming polymers. Interacts with FtsZ.

It localises to the cytoplasm. In terms of biological role, non-essential, abundant cell division factor that is required for proper Z-ring formation. It is recruited early to the divisome by direct interaction with FtsZ, stimulating Z-ring assembly and thereby promoting cell division earlier in the cell cycle. Its recruitment to the Z-ring requires functional FtsA or ZipA. This Shewanella halifaxensis (strain HAW-EB4) protein is Cell division protein ZapB.